The following is a 129-amino-acid chain: UPF0325 protein ESA_03178 (129 aa).

This sequence belongs to the UPF0325 family.

The sequence is that of UPF0325 protein ESA_03178 from Cronobacter sakazakii (strain ATCC BAA-894) (Enterobacter sakazakii).